The chain runs to 411 residues: Efflux pump periplasmic linker BepF (411 aa).

Residues 118–196 (FVLQKDALQA…SLEQAQINLG (79 aa)) adopt a coiled-coil conformation.

The protein belongs to the membrane fusion protein (MFP) (TC 8.A.1) family. Probably part of a tripartite efflux pump, which is composed of an outer membrane efflux protein, an inner membrane protein and a protein that expands the periplasmic space. Could form a tripartite pump with BepC and BepG.

It localises to the periplasm. Its function is as follows. May contribute to resistance to some drugs, such as deoxycholate, sodium dodecyl sulfate and nalidixic acid, in the absence of BepD and BepE. This is Efflux pump periplasmic linker BepF (bepF) from Brucella suis biovar 1 (strain 1330).